The following is an 82-amino-acid chain: uncharacterized protein (82 aa).

The next 2 membrane-spanning stretches (helical) occupy residues 8 to 28 (LTTA…LPAP) and 50 to 70 (LYTL…YFVL).

The protein resides in the cell membrane. This is an uncharacterized protein from Escherichia coli (strain K12).